A 249-amino-acid polypeptide reads, in one-letter code: Ubiquinone/menaquinone biosynthesis C-methyltransferase UbiE (249 aa).

Residues Thr-74, Asp-93, and 121-122 contribute to the S-adenosyl-L-methionine site; that span reads DA.

Belongs to the class I-like SAM-binding methyltransferase superfamily. MenG/UbiE family.

The enzyme catalyses a 2-demethylmenaquinol + S-adenosyl-L-methionine = a menaquinol + S-adenosyl-L-homocysteine + H(+). It catalyses the reaction a 2-methoxy-6-(all-trans-polyprenyl)benzene-1,4-diol + S-adenosyl-L-methionine = a 5-methoxy-2-methyl-3-(all-trans-polyprenyl)benzene-1,4-diol + S-adenosyl-L-homocysteine + H(+). It participates in quinol/quinone metabolism; menaquinone biosynthesis; menaquinol from 1,4-dihydroxy-2-naphthoate: step 2/2. It functions in the pathway cofactor biosynthesis; ubiquinone biosynthesis. Its function is as follows. Methyltransferase required for the conversion of demethylmenaquinol (DMKH2) to menaquinol (MKH2) and the conversion of 2-polyprenyl-6-methoxy-1,4-benzoquinol (DDMQH2) to 2-polyprenyl-3-methyl-6-methoxy-1,4-benzoquinol (DMQH2). The polypeptide is Ubiquinone/menaquinone biosynthesis C-methyltransferase UbiE (Acidiphilium cryptum (strain JF-5)).